A 142-amino-acid chain; its full sequence is Prefoldin subunit alpha (142 aa).

It belongs to the prefoldin subunit alpha family. In terms of assembly, heterohexamer of two alpha and four beta subunits.

The protein localises to the cytoplasm. Molecular chaperone capable of stabilizing a range of proteins. Seems to fulfill an ATP-independent, HSP70-like function in archaeal de novo protein folding. The protein is Prefoldin subunit alpha of Methanosarcina acetivorans (strain ATCC 35395 / DSM 2834 / JCM 12185 / C2A).